A 502-amino-acid chain; its full sequence is ATP synthase subunit alpha (502 aa).

The interval 115-135 is disordered; that stretch reads VDGLGPINTTNTRPIESPAPG. 169-176 serves as a coordination point for ATP; that stretch reads GDRQTGKT.

It belongs to the ATPase alpha/beta chains family. As to quaternary structure, F-type ATPases have 2 components, CF(1) - the catalytic core - and CF(0) - the membrane proton channel. CF(1) has five subunits: alpha(3), beta(3), gamma(1), delta(1), epsilon(1). CF(0) has three main subunits: a(1), b(2) and c(9-12). The alpha and beta chains form an alternating ring which encloses part of the gamma chain. CF(1) is attached to CF(0) by a central stalk formed by the gamma and epsilon chains, while a peripheral stalk is formed by the delta and b chains.

Its subcellular location is the cell membrane. The enzyme catalyses ATP + H2O + 4 H(+)(in) = ADP + phosphate + 5 H(+)(out). Produces ATP from ADP in the presence of a proton gradient across the membrane. The alpha chain is a regulatory subunit. This chain is ATP synthase subunit alpha, found in Bacillus anthracis (strain A0248).